We begin with the raw amino-acid sequence, 420 residues long: MESHLGNGVGSSRSAKNTKNTSSSVDWLSRDMLEMKIRDKTEADEERDSEPDIIDGVGAEPGHVITTTLPGRNGQSRQTVSYIAEHVVGTGSFGMVFQAKCRETGEVVAIKKVLQDKRYKNRELQIMQMLDHPNVVCLKHSFYSRTENEEVYLNLVLEFVPETVNRTARSYSRMNQLMPLIYVKLYTYQICRGLAYLHNCCGLCHRDIKPQNLLVNPHTHQLKICDFGSAKVLVKGEPNISYICSRYYRAPELIFGATEYTTAIDIWSTGCVMAELLLGQPLFPGESGVDQLVEIIKVLGTPTREEIKCMNPNYTEFKFPQIKPHPWHKVFQKRLPPEAVDLLCRFFQYSPNLRCTAVEACIHPFFDELRDPNARLPNGRPLPPLFNFKPQELSGIPPETVDRLVPEHARKQNHFMALHS.

The disordered stretch occupies residues 1–61; the sequence is MESHLGNGVG…DIIDGVGAEP (61 aa). Positions 10–26 are enriched in polar residues; sequence GSSRSAKNTKNTSSSVD. The segment covering 28-41 has biased composition (basic and acidic residues); sequence LSRDMLEMKIRDKT. Over residues 42–53 the composition is skewed to acidic residues; the sequence is EADEERDSEPDI. One can recognise a Protein kinase domain in the interval 82-366; that stretch reads YIAEHVVGTG…AVEACIHPFF (285 aa). ATP contacts are provided by residues 88–96 and Lys-111; that span reads VGTGSFGMV. The Proton acceptor role is filled by Asp-207. At Tyr-242 the chain carries Phosphotyrosine.

Belongs to the protein kinase superfamily. CMGC Ser/Thr protein kinase family. GSK-3 subfamily. In terms of processing, autophosphorylated mainly on threonine and serine residues.

It catalyses the reaction L-seryl-[protein] + ATP = O-phospho-L-seryl-[protein] + ADP + H(+). The enzyme catalyses L-threonyl-[protein] + ATP = O-phospho-L-threonyl-[protein] + ADP + H(+). Functionally, may mediate extracellular signals to regulate transcription in differentiating cells. This chain is Shaggy-related protein kinase delta (ASK4), found in Arabidopsis thaliana (Mouse-ear cress).